Here is a 940-residue protein sequence, read N- to C-terminus: Isoleucine--tRNA ligase (940 aa).

The 'HIGH' region motif lies at 58-68 (PYANGSIHIGH). L-isoleucyl-5'-AMP is bound at residue Glu564. The 'KMSKS' region signature appears at 605 to 609 (KMSKS). Position 608 (Lys608) interacts with ATP. 4 residues coordinate Zn(2+): Cys903, Cys906, Cys923, and Cys926.

Belongs to the class-I aminoacyl-tRNA synthetase family. IleS type 1 subfamily. Monomer. It depends on Zn(2+) as a cofactor.

The protein resides in the cytoplasm. It catalyses the reaction tRNA(Ile) + L-isoleucine + ATP = L-isoleucyl-tRNA(Ile) + AMP + diphosphate. Catalyzes the attachment of isoleucine to tRNA(Ile). As IleRS can inadvertently accommodate and process structurally similar amino acids such as valine, to avoid such errors it has two additional distinct tRNA(Ile)-dependent editing activities. One activity is designated as 'pretransfer' editing and involves the hydrolysis of activated Val-AMP. The other activity is designated 'posttransfer' editing and involves deacylation of mischarged Val-tRNA(Ile). This chain is Isoleucine--tRNA ligase, found in Shewanella putrefaciens (strain CN-32 / ATCC BAA-453).